Reading from the N-terminus, the 253-residue chain is uncharacterized protein (253 aa).

An NADP(+)-binding site is contributed by 10 to 35 (ISGAASKRGIGRATAELFASHGARVA). Residue Ser-144 participates in substrate binding. Tyr-159 functions as the Proton acceptor in the catalytic mechanism.

It belongs to the short-chain dehydrogenases/reductases (SDR) family.

This is an uncharacterized protein from Sinorhizobium fredii (strain NBRC 101917 / NGR234).